Here is a 227-residue protein sequence, read N- to C-terminus: Isopentenyl-diphosphate Delta-isomerase 1 (227 aa).

K36 lines the substrate pocket. The Mg(2+) site is built by H40 and H51. One can recognise a Nudix hydrolase domain in the interval 49–199 (LLHRAFSVFL…EIKLTPWFKI (151 aa)). R70 and K74 together coordinate substrate. C86 is a catalytic residue. S87 lines the substrate pocket. Mg(2+) contacts are provided by E146 and E148. The active site involves E148. Position 176 is an N6-acetyllysine (K176). A Microbody targeting signal motif is present at residues 225-227 (HRL).

It belongs to the IPP isomerase type 1 family. In terms of assembly, monomer. Mg(2+) serves as cofactor.

The protein resides in the peroxisome. The catalysed reaction is isopentenyl diphosphate = dimethylallyl diphosphate. The protein operates within isoprenoid biosynthesis; dimethylallyl diphosphate biosynthesis; dimethylallyl diphosphate from isopentenyl diphosphate: step 1/1. Functionally, catalyzes the 1,3-allylic rearrangement of the homoallylic substrate isopentenyl (IPP) to its highly electrophilic allylic isomer, dimethylallyl diphosphate (DMAPP). The protein is Isopentenyl-diphosphate Delta-isomerase 1 (Idi1) of Mus musculus (Mouse).